Consider the following 630-residue polypeptide: tRNA uridine 5-carboxymethylaminomethyl modification enzyme MnmG (630 aa).

15–20 contacts FAD; it reads GAGHAG. Residue 276-290 coordinates NAD(+); the sequence is GPRYCPSIEDKIVRF.

This sequence belongs to the MnmG family. As to quaternary structure, homodimer. Heterotetramer of two MnmE and two MnmG subunits. FAD serves as cofactor.

It localises to the cytoplasm. NAD-binding protein involved in the addition of a carboxymethylaminomethyl (cmnm) group at the wobble position (U34) of certain tRNAs, forming tRNA-cmnm(5)s(2)U34. This chain is tRNA uridine 5-carboxymethylaminomethyl modification enzyme MnmG, found in Latilactobacillus sakei subsp. sakei (strain 23K) (Lactobacillus sakei subsp. sakei).